The chain runs to 43 residues: RGVCSTPEGSCVHNGCICQNAPCCHESGCNWANVCPGFLWDKN.

Residue R1 is a propeptide. 4 disulfides stabilise this stretch: C4–C16, C11–C24, C18–C29, and C23–C35. Position 31 is a 6'-bromotryptophan (W31). Position 36 is a 4-hydroxyproline (P36). W40 is subject to 6'-bromotryptophan.

As to expression, expressed by the venom duct.

It localises to the secreted. Mu-conotoxins block voltage-gated sodium channels. This toxin reversibly blocks voltage-gated sodium channel in cephalopods, with no alteration in the voltage dependence of sodium conductance or on the kinetics of inactivation. This is Mu-conotoxin-like CalTx 12.2.1E from Californiconus californicus (California cone).